Reading from the N-terminus, the 72-residue chain is DNA gyrase inhibitor YacG (72 aa).

Zn(2+) contacts are provided by Cys-17, Cys-20, Cys-32, and Cys-36. Residues 52-72 (PGPEEDEMSYPPHSNDGNRSR) form a disordered region.

The protein belongs to the DNA gyrase inhibitor YacG family. As to quaternary structure, interacts with GyrB. Zn(2+) is required as a cofactor.

In terms of biological role, inhibits all the catalytic activities of DNA gyrase by preventing its interaction with DNA. Acts by binding directly to the C-terminal domain of GyrB, which probably disrupts DNA binding by the gyrase. The chain is DNA gyrase inhibitor YacG from Methylorubrum extorquens (strain CM4 / NCIMB 13688) (Methylobacterium extorquens).